The chain runs to 464 residues: Bifunctional protein GlmU (464 aa).

The tract at residues 1–231 is pyrophosphorylase; that stretch reads MDVVIMAAGK…ATQVAGVNSP (231 aa). UDP-N-acetyl-alpha-D-glucosamine-binding positions include Lys20, Gln78, 83 to 84, 105 to 107, Gly142, Glu156, and Asn229; these read GT and SGD. Residue Asp107 coordinates Mg(2+). Asn229 contacts Mg(2+). The interval 232–252 is linker; that stretch reads VQLAALERAFQSKVALQLMEQ. Residues 253 to 464 form an N-acetyltransferase region; that stretch reads GVRLADPARL…SIANWKRPSK (212 aa). Arg343 and Lys361 together coordinate UDP-N-acetyl-alpha-D-glucosamine. The active-site Proton acceptor is His373. Tyr376 and Asn387 together coordinate UDP-N-acetyl-alpha-D-glucosamine. Acetyl-CoA is bound by residues Ala390, 396–397, Ser415, Gly433, and Arg450; that span reads NY.

In the N-terminal section; belongs to the N-acetylglucosamine-1-phosphate uridyltransferase family. The protein in the C-terminal section; belongs to the transferase hexapeptide repeat family. In terms of assembly, homotrimer. Mg(2+) serves as cofactor.

It is found in the cytoplasm. The catalysed reaction is alpha-D-glucosamine 1-phosphate + acetyl-CoA = N-acetyl-alpha-D-glucosamine 1-phosphate + CoA + H(+). The enzyme catalyses N-acetyl-alpha-D-glucosamine 1-phosphate + UTP + H(+) = UDP-N-acetyl-alpha-D-glucosamine + diphosphate. Its pathway is nucleotide-sugar biosynthesis; UDP-N-acetyl-alpha-D-glucosamine biosynthesis; N-acetyl-alpha-D-glucosamine 1-phosphate from alpha-D-glucosamine 6-phosphate (route II): step 2/2. The protein operates within nucleotide-sugar biosynthesis; UDP-N-acetyl-alpha-D-glucosamine biosynthesis; UDP-N-acetyl-alpha-D-glucosamine from N-acetyl-alpha-D-glucosamine 1-phosphate: step 1/1. It participates in bacterial outer membrane biogenesis; LPS lipid A biosynthesis. Its function is as follows. Catalyzes the last two sequential reactions in the de novo biosynthetic pathway for UDP-N-acetylglucosamine (UDP-GlcNAc). The C-terminal domain catalyzes the transfer of acetyl group from acetyl coenzyme A to glucosamine-1-phosphate (GlcN-1-P) to produce N-acetylglucosamine-1-phosphate (GlcNAc-1-P), which is converted into UDP-GlcNAc by the transfer of uridine 5-monophosphate (from uridine 5-triphosphate), a reaction catalyzed by the N-terminal domain. This chain is Bifunctional protein GlmU, found in Albidiferax ferrireducens (strain ATCC BAA-621 / DSM 15236 / T118) (Rhodoferax ferrireducens).